We begin with the raw amino-acid sequence, 553 residues long: Transmembrane protein DDB_G0292058 (553 aa).

Positions 1–26 (MIKINKILSLLIILLIINCNYQFVKA) are cleaved as a signal peptide. A run of 2 helical transmembrane segments spans residues 80–100 (ILLSGITFIIAAITLIFGIIF) and 137–157 (VFILKLVTLIMVAGCVAVFIT). N-linked (GlcNAc...) asparagine glycosylation is found at Asn-162, Asn-171, Asn-178, and Asn-195. The next 2 membrane-spanning stretches (helical) occupy residues 243–263 (IIIVGLVFCMVVAGLIGVSAL) and 274–294 (SIALVILIPFMWIVFSVHYPI). N-linked (GlcNAc...) asparagine glycosylation is found at Asn-315, Asn-332, Asn-351, Asn-396, Asn-405, and Asn-462. A helical transmembrane segment spans residues 515–535 (LLIAPTAVFAILLTGLGITGI).

Its subcellular location is the membrane. The sequence is that of Transmembrane protein DDB_G0292058 from Dictyostelium discoideum (Social amoeba).